We begin with the raw amino-acid sequence, 467 residues long: GTPase Der (467 aa).

EngA-type G domains are found at residues 3 to 167 and 179 to 352; these read PTLV…PYEE and PVIA…AAAR. Residues 9–16, 56–60, 119–122, 185–192, 232–236, and 297–300 contribute to the GTP site; these read GRPNVGKS, DTGGF, NKTE, DTAGL, and NKWD. One can recognise a KH-like domain in the interval 353 to 437; it reads AHIPTPKLTR…PLRVEFRTGH (85 aa). Residues 434–467 form a disordered region; that stretch reads RTGHNPYAGKKTPLTEEEARRAHSRRRRNRKKYG. Basic residues predominate over residues 455–467; sequence AHSRRRRNRKKYG.

This sequence belongs to the TRAFAC class TrmE-Era-EngA-EngB-Septin-like GTPase superfamily. EngA (Der) GTPase family. In terms of assembly, associates with the 50S ribosomal subunit.

In terms of biological role, GTPase that plays an essential role in the late steps of ribosome biogenesis. The sequence is that of GTPase Der from Nitrosomonas europaea (strain ATCC 19718 / CIP 103999 / KCTC 2705 / NBRC 14298).